The chain runs to 364 residues: Long-wave-sensitive opsin 1 (364 aa).

Over M1 to A58 the chain is Extracellular. S22 carries an O-linked (GlcNAc) serine glycan. N34 is a glycosylation site (N-linked (GlcNAc...) asparagine). A helical transmembrane segment spans residues W59–M79. Residues R80–W90 lie on the Cytoplasmic side of the membrane. Residues I91–V111 form a helical membrane-spanning segment. The Extracellular segment spans residues V112–C126. C126 and C203 are oxidised to a cystine. Residues V127 to I147 traverse the membrane as a helical segment. At S148–L168 the chain is on the cytoplasmic side. The helical transmembrane segment at A169–F189 threads the bilayer. Residues G190–Y219 lie on the Extracellular side of the membrane. The helical transmembrane segment at M220 to L240 threads the bilayer. Over Q241–M269 the chain is Cytoplasmic. A helical transmembrane segment spans residues V270–F290. At A291–P301 the chain is on the extracellular side. A helical transmembrane segment spans residues L302 to F324. K312 bears the N6-(retinylidene)lysine mark. The Cytoplasmic segment spans residues M325–A364.

The protein belongs to the G-protein coupled receptor 1 family. Opsin subfamily. In terms of processing, phosphorylated on some or all of the serine and threonine residues present in the C-terminal region. In terms of tissue distribution, the three color pigments are found in the cone photoreceptor cells.

The protein resides in the membrane. Visual pigments are the light-absorbing molecules that mediate vision. They consist of an apoprotein, opsin, covalently linked to cis-retinal. In Canis lupus familiaris (Dog), this protein is Long-wave-sensitive opsin 1 (OPN1LW).